The chain runs to 295 residues: 15-cis-phytoene synthase (295 aa).

This sequence belongs to the phytoene/squalene synthase family. The cofactor is ATP. It depends on Mn(2+) as a cofactor.

It carries out the reaction 2 (2E,6E,10E)-geranylgeranyl diphosphate = 15-cis-phytoene + 2 diphosphate. The protein operates within carotenoid biosynthesis; phytoene biosynthesis. Significant inhibition is seen at GGPP concentrations above 100 uM. Its function is as follows. Involved in the biosynthesis of carotenoids. Catalyzes stereoselectively the condensation of two molecules of geranylgeranyl diphosphate (GGPP) to give prephytoene diphosphate (PPPP) and the subsequent rearrangement of the cyclopropylcarbinyl intermediate to yield 15-cis-phytoene. This chain is 15-cis-phytoene synthase (crtB), found in Enterobacter agglomerans (Erwinia herbicola).